The sequence spans 226 residues: Ribose-5-phosphate isomerase A (226 aa).

Substrate-binding positions include Thr-33 to Thr-36, Asp-86 to Asp-89, and Lys-99 to Gly-102. Catalysis depends on Glu-108, which acts as the Proton acceptor. Lys-126 serves as a coordination point for substrate.

Belongs to the ribose 5-phosphate isomerase family. Homodimer.

The enzyme catalyses aldehydo-D-ribose 5-phosphate = D-ribulose 5-phosphate. The protein operates within carbohydrate degradation; pentose phosphate pathway; D-ribose 5-phosphate from D-ribulose 5-phosphate (non-oxidative stage): step 1/1. Functionally, catalyzes the reversible conversion of ribose-5-phosphate to ribulose 5-phosphate. The sequence is that of Ribose-5-phosphate isomerase A from Bordetella parapertussis (strain 12822 / ATCC BAA-587 / NCTC 13253).